The chain runs to 1064 residues: Carbamoyl phosphate synthase large chain (1064 aa).

Residues 1–401 are carboxyphosphate synthetic domain; sequence MPKRNDIKKI…SLLKAVRSLE (401 aa). 12 residues coordinate ATP: arginine 129, arginine 169, glycine 175, glycine 176, glutamate 208, isoleucine 210, glutamate 215, glycine 241, valine 242, histidine 243, glutamine 284, and glutamate 298. The region spanning 133–327 is the ATP-grasp 1 domain; that stretch reads KELCESINEP…IAKMSAKIAI (195 aa). 3 residues coordinate Mg(2+): glutamine 284, glutamate 298, and asparagine 300. The Mn(2+) site is built by glutamine 284, glutamate 298, and asparagine 300. The segment at 402–546 is oligomerization domain; sequence IGVFHNEMTE…YSTYEWENES (145 aa). A carbamoyl phosphate synthetic domain region spans residues 547–929; it reads KRSDKEKIIV…ALYKSFEAAK (383 aa). Residues 671 to 861 form the ATP-grasp 2 domain; sequence EKALQDLDIP…MAQLATQMIL (191 aa). Positions 707, 746, 748, 752, 777, 778, 779, 780, 820, and 832 each coordinate ATP. Mg(2+) is bound by residues glutamine 820, glutamate 832, and asparagine 834. Residues glutamine 820, glutamate 832, and asparagine 834 each contribute to the Mn(2+) site. Residues 930–1064 enclose the MGS-like domain; that stretch reads LHMADYGSVL…QSRSFTTKNI (135 aa). Residues 930 to 1064 are allosteric domain; it reads LHMADYGSVL…QSRSFTTKNI (135 aa).

It belongs to the CarB family. In terms of assembly, composed of two chains; the small (or glutamine) chain promotes the hydrolysis of glutamine to ammonia, which is used by the large (or ammonia) chain to synthesize carbamoyl phosphate. Tetramer of heterodimers (alpha,beta)4. Mg(2+) serves as cofactor. It depends on Mn(2+) as a cofactor.

It catalyses the reaction hydrogencarbonate + L-glutamine + 2 ATP + H2O = carbamoyl phosphate + L-glutamate + 2 ADP + phosphate + 2 H(+). It carries out the reaction hydrogencarbonate + NH4(+) + 2 ATP = carbamoyl phosphate + 2 ADP + phosphate + 2 H(+). The protein operates within amino-acid biosynthesis; L-arginine biosynthesis; carbamoyl phosphate from bicarbonate: step 1/1. Its pathway is pyrimidine metabolism; UMP biosynthesis via de novo pathway; (S)-dihydroorotate from bicarbonate: step 1/3. Large subunit of the glutamine-dependent carbamoyl phosphate synthetase (CPSase). CPSase catalyzes the formation of carbamoyl phosphate from the ammonia moiety of glutamine, carbonate, and phosphate donated by ATP, constituting the first step of 2 biosynthetic pathways, one leading to arginine and/or urea and the other to pyrimidine nucleotides. The large subunit (synthetase) binds the substrates ammonia (free or transferred from glutamine from the small subunit), hydrogencarbonate and ATP and carries out an ATP-coupled ligase reaction, activating hydrogencarbonate by forming carboxy phosphate which reacts with ammonia to form carbamoyl phosphate. The chain is Carbamoyl phosphate synthase large chain from Lactococcus lactis subsp. cremoris (strain MG1363).